A 144-amino-acid chain; its full sequence is MKGLVILVSLMCLALYNRICAYQVRGMRSDVLCGDIRFTVQCICNELGYFPTERLDKPCPWPNREKRSAPEDELAFEDYEDQDYFHPRALSIPSEIEHDNEKESDAFSILSRGKREIAFYQECCNIRTEHKCNRTTVSLYCRTY.

An N-terminal signal peptide occupies residues 1–21 (MKGLVILVSLMCLALYNRICA). Intrachain disulfides connect C33/C123, C42/C59, C44/C141, and C124/C132. The propeptide at 68–113 (SAPEDELAFEDYEDQDYFHPRALSIPSEIEHDNEKESDAFSILSRG) is c peptide. N133 carries N-linked (GlcNAc...) (complex) asparagine glycosylation.

Androgenic gland.

It is found in the secreted. Controls sex differentiation and the formation of male appendages, spermatogenesis, pigmentation, and male specific behavior. This chain is Androgenic gland hormone, found in Armadillidium vulgare (Pillbug).